The chain runs to 141 residues: Large ribosomal subunit protein uL16 (141 aa).

The segment at 1–23 (MLMPKRTKYRKQMKGRNRGKAHR) is disordered.

The protein belongs to the universal ribosomal protein uL16 family. In terms of assembly, part of the 50S ribosomal subunit.

In terms of biological role, binds 23S rRNA and is also seen to make contacts with the A and possibly P site tRNAs. In Helicobacter pylori (strain J99 / ATCC 700824) (Campylobacter pylori J99), this protein is Large ribosomal subunit protein uL16.